Reading from the N-terminus, the 273-residue chain is Protein GMH1 (273 aa).

The tract at residues 1 to 33 (MSYLPTYSNDLPAGPQGQRRRNNGNENDARQGY) is disordered. Position 2 is an N-acetylserine (serine 2). The Cytoplasmic portion of the chain corresponds to 2 to 89 (SYLPTYSNDL…QTKNQWARDD (88 aa)). The chain crosses the membrane as a helical span at residues 90 to 110 (PSFFIFQIALISLSSIIWSIY). Residues 111-134 (NSGFNNDSDMGALSIIGHFFKSLV) lie on the Lumenal side of the membrane. A helical membrane pass occupies residues 135–155 (MMVILDFFIFGFIMATIFYLL). At 156–175 (LNRSHFKFKSSQNSVVEWAY) the chain is on the cytoplasmic side. A helical membrane pass occupies residues 176–196 (CFDVHCNSFLIILLCLYFIQF). Residues 197–216 (LLLPIINLQNWISLLIGNSL) are Lumenal-facing. A helical membrane pass occupies residues 217–237 (YCFAIGHYFILTFYGYNQLPF). Residues 238–242 (LKNLN) lie on the Cytoplasmic side of the membrane. Residues 243-263 (FILLPTLGLSIIYLISLFGID) traverse the membrane as a helical segment. Topologically, residues 264–273 (LSKKLSFYNY) are lumenal.

Belongs to the unc-50 family. As to quaternary structure, interacts with GEA1 and GEA2.

The protein resides in the golgi apparatus membrane. The protein localises to the endoplasmic reticulum membrane. This chain is Protein GMH1 (GMH1), found in Saccharomyces cerevisiae (strain ATCC 204508 / S288c) (Baker's yeast).